A 513-amino-acid polypeptide reads, in one-letter code: U3 small nucleolar RNA-associated protein 15 (513 aa).

WD repeat units follow at residues 37 to 78, 79 to 118, 124 to 162, 166 to 206, 210 to 247, and 250 to 294; these read KEHN…KTFS, RFKDVVYSASFRSDGKLLCAGDATGLVSVYDSYNPRTILL, THPTHVTKFHTQDNKILATASDDRVTRLWDISNAYEPQL, GATD…STPI, NHDQPVENVIAVSPTQIVSCGGNNFKVWDLTSNKKLYE, and NFNK…QVKF. Positions 332 to 354 are disordered; that stretch reads KKKEKRSSDKENAPASFNKNAKS.

In terms of assembly, interacts with snoRNA U3. Interacts with MPP10. Component of the ribosomal small subunit (SSU) processome composed of at least 40 protein subunits and snoRNA U3. In the absence of snoRNA3, forms a complex with other t-UTPs. This complex can associate with pre-18S ribosomal RNAs.

It is found in the nucleus. Its subcellular location is the nucleolus. In terms of biological role, involved in nucleolar processing of pre-18S ribosomal RNA. Required for optimal pre-ribosomal RNA transcription by RNA polymerase I together with a subset of U3 proteins required for transcription (t-UTPs). The protein is U3 small nucleolar RNA-associated protein 15 (UTP15) of Saccharomyces cerevisiae (strain ATCC 204508 / S288c) (Baker's yeast).